We begin with the raw amino-acid sequence, 396 residues long: Flavohemoprotein (396 aa).

Positions 1–136 (MLDNQTIATV…LADIFINREE (136 aa)) constitute a Globin domain. Residue His-85 coordinates heme b. Residues Tyr-95 and Glu-135 each act as charge relay system in the active site. The interval 147-396 (GGWRGLRPFR…YECFGPHKVI (250 aa)) is reductase. Positions 150–255 (RGLRPFRINR…TAPRGDFFLD (106 aa)) constitute an FAD-binding FR-type domain. FAD contacts are provided by residues Tyr-188 and 204–207 (RQYS). 268–273 (GVGLTP) provides a ligand contact to NADP(+). Residue 389 to 392 (CFGP) coordinates FAD.

This sequence belongs to the globin family. Two-domain flavohemoproteins subfamily. In the C-terminal section; belongs to the flavoprotein pyridine nucleotide cytochrome reductase family. The cofactor is heme b. Requires FAD as cofactor.

It catalyses the reaction 2 nitric oxide + NADPH + 2 O2 = 2 nitrate + NADP(+) + H(+). The catalysed reaction is 2 nitric oxide + NADH + 2 O2 = 2 nitrate + NAD(+) + H(+). Its function is as follows. Is involved in NO detoxification in an aerobic process, termed nitric oxide dioxygenase (NOD) reaction that utilizes O(2) and NAD(P)H to convert NO to nitrate, which protects the bacterium from various noxious nitrogen compounds. Therefore, plays a central role in the inducible response to nitrosative stress. This Photorhabdus laumondii subsp. laumondii (strain DSM 15139 / CIP 105565 / TT01) (Photorhabdus luminescens subsp. laumondii) protein is Flavohemoprotein.